The chain runs to 82 residues: MAHTVKIYDTCIGCTQCVRACPTDVLEMVPWKGNNKAGMIAAAPRTEDCVGCKRCETACPTDFLSIRVYLGPETTRSMGLAY.

4Fe-4S ferredoxin-type domains follow at residues 2–31 (AHTV…MVPW) and 40–69 (IAAA…IRVY). Cys11, Cys14, Cys17, Cys21, Cys49, Cys52, Cys55, and Cys59 together coordinate [4Fe-4S] cluster.

The cyanobacterial PSI reaction center is composed of one copy each of PsaA,B,C,D,E,F,I,J,K,L,M and X, and forms trimeric complexes. [4Fe-4S] cluster is required as a cofactor.

The protein localises to the cellular thylakoid membrane. It catalyses the reaction reduced [plastocyanin] + hnu + oxidized [2Fe-2S]-[ferredoxin] = oxidized [plastocyanin] + reduced [2Fe-2S]-[ferredoxin]. Apoprotein for the two 4Fe-4S centers FA and FB of photosystem I (PSI); essential for photochemical activity. FB is the terminal electron acceptor of PSI, donating electrons to ferredoxin. The C-terminus interacts with PsaA/B/D and helps assemble the protein into the PSI complex. Required for binding of PsaD and PsaE to PSI. PSI is a plastocyanin/cytochrome c6-ferredoxin oxidoreductase, converting photonic excitation into a charge separation, which transfers an electron from the donor P700 chlorophyll pair to the spectroscopically characterized acceptors A0, A1, FX, FA and FB in turn. The protein is Photosystem I iron-sulfur center of Synechococcus sp. (strain JA-3-3Ab) (Cyanobacteria bacterium Yellowstone A-Prime).